A 90-amino-acid chain; its full sequence is Small ribosomal subunit protein uS15 (90 aa).

This sequence belongs to the universal ribosomal protein uS15 family. As to quaternary structure, part of the 30S ribosomal subunit. Forms a bridge to the 50S subunit in the 70S ribosome, contacting the 23S rRNA.

Its function is as follows. One of the primary rRNA binding proteins, it binds directly to 16S rRNA where it helps nucleate assembly of the platform of the 30S subunit by binding and bridging several RNA helices of the 16S rRNA. Functionally, forms an intersubunit bridge (bridge B4) with the 23S rRNA of the 50S subunit in the ribosome. The protein is Small ribosomal subunit protein uS15 of Helicobacter pylori (strain Shi470).